The primary structure comprises 128 residues: MTMLISLPTAPSVPNYQSLERPLNFTMAAAAKVRELIQEENNADLALRVYIQGGGCSGFQYGFEFDENRADDDLALETDGVVLLVDPLSLQYLLGAEVDYTESLTGAKFVIRNPNAKTTCGCGSSFSV.

Cys56, Cys120, and Cys122 together coordinate iron-sulfur cluster.

Belongs to the HesB/IscA family. As to quaternary structure, homodimer. It depends on iron-sulfur cluster as a cofactor.

Functionally, required for insertion of 4Fe-4S clusters for at least IspG. In Xylella fastidiosa (strain M23), this protein is Iron-sulfur cluster insertion protein ErpA.